Consider the following 716-residue polypeptide: Translation initiation factor IF-2 (716 aa).

The interval 53 to 135 (GGAGVTSQKP…PLKPKKELPE (83 aa)) is disordered. A compositionally biased stretch (polar residues) spans 57–83 (VTSQKPAETNKNKPQGINQQPAGNQPN). The span at 93–109 (VQNNQFNKNKKNNNNNK) shows a compositional bias: low complexity. A tr-type G domain is found at 217 to 386 (IRPPVVTIMG…LLVSEVEELK (170 aa)). Residues 226–233 (GHVDHGKT) form a G1 region. Residue 226–233 (GHVDHGKT) participates in GTP binding. The interval 251–255 (GITQH) is G2. Residues 272–275 (DTPG) are G3. GTP contacts are provided by residues 272 to 276 (DTPGH) and 326 to 329 (NKVD). A G4 region spans residues 326–329 (NKVD). A G5 region spans residues 362-364 (SAL).

The protein belongs to the TRAFAC class translation factor GTPase superfamily. Classic translation factor GTPase family. IF-2 subfamily.

The protein resides in the cytoplasm. In terms of biological role, one of the essential components for the initiation of protein synthesis. Protects formylmethionyl-tRNA from spontaneous hydrolysis and promotes its binding to the 30S ribosomal subunits. Also involved in the hydrolysis of GTP during the formation of the 70S ribosomal complex. The protein is Translation initiation factor IF-2 of Bacillus velezensis (strain DSM 23117 / BGSC 10A6 / LMG 26770 / FZB42) (Bacillus amyloliquefaciens subsp. plantarum).